The primary structure comprises 105 residues: Large ribosomal subunit protein uL24 (105 aa).

Belongs to the universal ribosomal protein uL24 family. Part of the 50S ribosomal subunit.

In terms of biological role, one of two assembly initiator proteins, it binds directly to the 5'-end of the 23S rRNA, where it nucleates assembly of the 50S subunit. One of the proteins that surrounds the polypeptide exit tunnel on the outside of the subunit. The chain is Large ribosomal subunit protein uL24 from Staphylococcus carnosus (strain TM300).